A 261-amino-acid polypeptide reads, in one-letter code: MSRKPLIAGNWKMNLNHFEAIALVQKIAFSLPDKYFDKVDVTVIPPFTDIRSVQTLVDGDKLRLTYGAQDLSVYDSGAYTGEVSGAFLAKLGVTYVVVGHSERRQYHGEDDALVAAKAAAALKHGLTPIVCIGEALDIREAGDHVQYNVNSLRGSLAGLSAEQVGKVVIAYEPVWAIGTGRVASAADAQEVCAAIRAELAQIANADVAGSVRVLYGGSANAKNVGEIVAQEDVDGALVGGASLDGEQFAQMSAIAAGGPLL.

Residue 10 to 12 coordinates substrate; that stretch reads NWK. The Electrophile role is filled by His-100. The active-site Proton acceptor is Glu-172. Substrate contacts are provided by residues Gly-178, Ser-218, and 239-240; that span reads GG.

This sequence belongs to the triosephosphate isomerase family. Homodimer.

Its subcellular location is the cytoplasm. The catalysed reaction is D-glyceraldehyde 3-phosphate = dihydroxyacetone phosphate. Its pathway is carbohydrate biosynthesis; gluconeogenesis. It functions in the pathway carbohydrate degradation; glycolysis; D-glyceraldehyde 3-phosphate from glycerone phosphate: step 1/1. Its function is as follows. Involved in the gluconeogenesis. Catalyzes stereospecifically the conversion of dihydroxyacetone phosphate (DHAP) to D-glyceraldehyde-3-phosphate (G3P). This Mycobacteroides abscessus (strain ATCC 19977 / DSM 44196 / CCUG 20993 / CIP 104536 / JCM 13569 / NCTC 13031 / TMC 1543 / L948) (Mycobacterium abscessus) protein is Triosephosphate isomerase.